We begin with the raw amino-acid sequence, 288 residues long: MAVIYWDRSKIVWSFEPWSLRLTWYGVFFTVGIFLACLSARYLALSYYGLKDHLSFSKSQLRVALENFFIYSILFIVPGARLAYVIFYGWSFYLQHPEEIIQIWHGGLSSHGGVLGFLLWAAIFSWIYKKKISKLTFLFLTDLCGSVFGIAAFFIRLGNFWNQEIVGTPTSLPWGVVFSDPMQGVQGVPVHPVQLYEGISYLVVSGILYFLSYKRYLHLGKGYVTSIACISVAFIRFFAEYVKSHQGKVLAEDCLLTIGQILSIPLFLFGVALLIICSLKARRHRSHI.

4 consecutive transmembrane segments (helical) span residues 18-38 (WSLRLTWYGVFFTVGIFLACL), 68-88 (FFIYSILFIVPGARLAYVIFY), 107-127 (GLSSHGGVLGFLLWAAIFSWI), and 135-155 (LTFLFLTDLCGSVFGIAAFFI). Position 156 (Arg156) interacts with a 1,2-diacyl-sn-glycero-3-phospho-(1'-sn-glycerol). The next 3 helical transmembrane spans lie at 193-213 (VQLYEGISYLVVSGILYFLSY), 222-242 (GYVTSIACISVAFIRFFAEYV), and 256-276 (LTIGQILSIPLFLFGVALLII).

This sequence belongs to the Lgt family.

Its subcellular location is the cell inner membrane. The catalysed reaction is L-cysteinyl-[prolipoprotein] + a 1,2-diacyl-sn-glycero-3-phospho-(1'-sn-glycerol) = an S-1,2-diacyl-sn-glyceryl-L-cysteinyl-[prolipoprotein] + sn-glycerol 1-phosphate + H(+). It participates in protein modification; lipoprotein biosynthesis (diacylglyceryl transfer). Catalyzes the transfer of the diacylglyceryl group from phosphatidylglycerol to the sulfhydryl group of the N-terminal cysteine of a prolipoprotein, the first step in the formation of mature lipoproteins. The chain is Phosphatidylglycerol--prolipoprotein diacylglyceryl transferase from Chlamydia pneumoniae (Chlamydophila pneumoniae).